Here is a 525-residue protein sequence, read N- to C-terminus: Potassium voltage-gated channel subfamily A member 3 (525 aa).

Residues 1 to 23 are disordered; that stretch reads MTVVPGDHLLEPEAAGGGGGDPP. Over 1-184 the chain is Cytoplasmic; sequence MTVVPGDHLL…EYPESSGPAR (184 aa). A helical membrane pass occupies residues 185–203; that stretch reads GIAIVSVLVILISIVIFCL. At 204–244 the chain is on the extracellular side; that stretch reads ETLPEFRDEKDYPASPSQDVFEAANNSTSGASSGASSFSDP. N-linked (GlcNAc...) asparagine glycosylation occurs at asparagine 229. A helical transmembrane segment spans residues 245 to 266; the sequence is FFVVETLCIIWFSFELLVRFFA. The S-palmitoyl cysteine moiety is linked to residue cysteine 267. Over 267-277 the chain is Cytoplasmic; sequence CPSKATFSRNI. Residues 278–298 traverse the membrane as a helical segment; that stretch reads MNLIDIVAIIPYFITLGTELA. Residues 299–312 are Extracellular-facing; sequence ERQGNGQQAMSLAI. Residues 313–331 form a helical; Voltage-sensor membrane-spanning segment; the sequence is LRVIRLVRVFRIFKLSRHS. Residues 332–347 are Cytoplasmic-facing; that stretch reads KGLQILGQTLKASMRE. The chain crosses the membrane as a helical span at residues 348-367; that stretch reads LGLLIFFLFIGVILFSSAVY. The Extracellular segment spans residues 368–408; that stretch reads FAEADDPSSGFNSIPDAFWWAVVTMTTVGYGDMHPVTIGGK. The Selectivity filter signature appears at 394 to 399; sequence TVGYGD. A helical membrane pass occupies residues 409 to 431; the sequence is IVGSLCAIAGVLTIALPVPVIVS. Residues 432 to 525 are Cytoplasmic-facing; that stretch reads NFNYFYHRET…VNIKKIFTDV (94 aa). The interaction with KCNE4 stretch occupies residues 432 to 525; that stretch reads NFNYFYHRET…VNIKKIFTDV (94 aa). Tyrosine 449 is subject to Phosphotyrosine. A Phosphoserine; by PKA modification is found at serine 470. The short motif at 523–525 is the PDZ-binding element; the sequence is TDV.

This sequence belongs to the potassium channel family. A (Shaker) (TC 1.A.1.2) subfamily. Kv1.3/KCNA3 sub-subfamily. As to quaternary structure, homotetramer. Forms heterooligomers with KCNE4 which inhibits KCNA3 activity by impairing localization to the cell membrane. The stoichiometry of KCNA3 and KCNE4 in the heterooligomers are 4:1, 4:2, 4:3 or 4:4 respectively. Increasing the number of KCNE4 subunits steadily slows the activation KCNA3 and decreases its abundance at the cell membrane. However, a single subunit of KCNE4 is sufficient for the cooperative enhancement of the inactivating function of the channel. Interacts with SEC24D; this interaction is reduced in the presence of KCNE4. Interacts with DLG1, DLG2 and DLG4 via their PDZ domains. Phosphorylation on Tyr-449 inhibits its channel activity. In terms of processing, N-glycosylation promotes the cell surface expression.

Its subcellular location is the cell membrane. It carries out the reaction K(+)(in) = K(+)(out). Its activity is regulated as follows. Activity is up-regulated by JAK2. In terms of biological role, mediates the voltage-dependent potassium ion permeability of excitable membranes. Assuming opened or closed conformations in response to the voltage difference across the membrane, the protein forms a potassium-selective channel through which potassium ions may pass in accordance with their electrochemical gradient. The sequence is that of Potassium voltage-gated channel subfamily A member 3 (Kcna3) from Rattus norvegicus (Rat).